A 157-amino-acid polypeptide reads, in one-letter code: SsrA-binding protein (157 aa).

The protein belongs to the SmpB family.

Its subcellular location is the cytoplasm. Required for rescue of stalled ribosomes mediated by trans-translation. Binds to transfer-messenger RNA (tmRNA), required for stable association of tmRNA with ribosomes. tmRNA and SmpB together mimic tRNA shape, replacing the anticodon stem-loop with SmpB. tmRNA is encoded by the ssrA gene; the 2 termini fold to resemble tRNA(Ala) and it encodes a 'tag peptide', a short internal open reading frame. During trans-translation Ala-aminoacylated tmRNA acts like a tRNA, entering the A-site of stalled ribosomes, displacing the stalled mRNA. The ribosome then switches to translate the ORF on the tmRNA; the nascent peptide is terminated with the 'tag peptide' encoded by the tmRNA and targeted for degradation. The ribosome is freed to recommence translation, which seems to be the essential function of trans-translation. The sequence is that of SsrA-binding protein from Elusimicrobium minutum (strain Pei191).